Consider the following 332-residue polypeptide: PTS-dependent dihydroxyacetone kinase, dihydroxyacetone-binding subunit DhaK (332 aa).

In terms of domain architecture, DhaK spans 9–331; it reads QPQDVVSEML…LNEDVKTISW (323 aa). Residues 55–58, Lys106, and Asp111 contribute to the dihydroxyacetone site; that span reads GSGH. Catalysis depends on His58, which acts as the Proton acceptor. The active-site Tele-hemiaminal-histidine intermediate is His220.

In terms of assembly, homodimer. The dihydroxyacetone kinase complex is composed of a homodimer of DhaM, a homodimer of DhaK and the subunit DhaL.

It catalyses the reaction dihydroxyacetone + phosphoenolpyruvate = dihydroxyacetone phosphate + pyruvate. The protein operates within polyol metabolism; glycerol degradation. Dihydroxyacetone binding subunit of the dihydroxyacetone kinase, which is responsible the phosphoenolpyruvate (PEP)-dependent phosphorylation of dihydroxyacetone via a phosphoryl group transfer from DhaL-ATP. This Lactococcus lactis subsp. lactis (strain IL1403) (Streptococcus lactis) protein is PTS-dependent dihydroxyacetone kinase, dihydroxyacetone-binding subunit DhaK.